A 242-amino-acid chain; its full sequence is Large ribosomal subunit protein uL30x (242 aa).

It belongs to the universal ribosomal protein uL30 family.

The polypeptide is Large ribosomal subunit protein uL30x (RPL7C) (Arabidopsis thaliana (Mouse-ear cress)).